The primary structure comprises 335 residues: 4-hydroxy-3-methylbut-2-enyl diphosphate reductase (335 aa).

C21 contacts [4Fe-4S] cluster. (2E)-4-hydroxy-3-methylbut-2-enyl diphosphate is bound by residues H50 and H86. Residues H50 and H86 each contribute to the dimethylallyl diphosphate site. Isopentenyl diphosphate is bound by residues H50 and H86. Position 108 (C108) interacts with [4Fe-4S] cluster. H136 provides a ligand contact to (2E)-4-hydroxy-3-methylbut-2-enyl diphosphate. Residue H136 participates in dimethylallyl diphosphate binding. H136 lines the isopentenyl diphosphate pocket. Catalysis depends on E138, which acts as the Proton donor. T177 contributes to the (2E)-4-hydroxy-3-methylbut-2-enyl diphosphate binding site. C207 is a [4Fe-4S] cluster binding site. Residues S235, S236, N237, and S280 each contribute to the (2E)-4-hydroxy-3-methylbut-2-enyl diphosphate site. The dimethylallyl diphosphate site is built by S235, S236, N237, and S280. The isopentenyl diphosphate site is built by S235, S236, N237, and S280.

It belongs to the IspH family. It depends on [4Fe-4S] cluster as a cofactor.

It carries out the reaction isopentenyl diphosphate + 2 oxidized [2Fe-2S]-[ferredoxin] + H2O = (2E)-4-hydroxy-3-methylbut-2-enyl diphosphate + 2 reduced [2Fe-2S]-[ferredoxin] + 2 H(+). The enzyme catalyses dimethylallyl diphosphate + 2 oxidized [2Fe-2S]-[ferredoxin] + H2O = (2E)-4-hydroxy-3-methylbut-2-enyl diphosphate + 2 reduced [2Fe-2S]-[ferredoxin] + 2 H(+). It participates in isoprenoid biosynthesis; dimethylallyl diphosphate biosynthesis; dimethylallyl diphosphate from (2E)-4-hydroxy-3-methylbutenyl diphosphate: step 1/1. Its pathway is isoprenoid biosynthesis; isopentenyl diphosphate biosynthesis via DXP pathway; isopentenyl diphosphate from 1-deoxy-D-xylulose 5-phosphate: step 6/6. Catalyzes the conversion of 1-hydroxy-2-methyl-2-(E)-butenyl 4-diphosphate (HMBPP) into a mixture of isopentenyl diphosphate (IPP) and dimethylallyl diphosphate (DMAPP). Acts in the terminal step of the DOXP/MEP pathway for isoprenoid precursor biosynthesis. This Rhizobium rhizogenes (strain K84 / ATCC BAA-868) (Agrobacterium radiobacter) protein is 4-hydroxy-3-methylbut-2-enyl diphosphate reductase.